We begin with the raw amino-acid sequence, 581 residues long: Sulfate adenylyltransferase (581 aa).

The segment at 1–176 (MANAPHGGVL…VQAIQAPTHF (176 aa)) is N-terminal. The catalytic stretch occupies residues 177-401 (DYVPLRFTPA…LRESYPPRPQ (225 aa)). A sulfate-binding site is contributed by Q204. ATP is bound by residues 204–207 (QTRN) and 298–301 (GRDH). Residues T205, R206, and N207 contribute to the active site. R206 lines the sulfate pocket. Residue A302 participates in sulfate binding. ATP is bound at residue M340. The tract at residues 402 to 581 (QGFTILLTGL…IMILESQNLV (180 aa)) is allosteric regulation domain; adenylyl-sulfate kinase-like. 3'-phosphoadenylyl sulfate is bound by residues 441-444 (EELR), 486-487 (TA), and R526.

This sequence in the N-terminal section; belongs to the sulfate adenylyltransferase family. It in the C-terminal section; belongs to the APS kinase family. Homohexamer. Dimer of trimers.

It localises to the cytoplasm. It carries out the reaction sulfate + ATP + H(+) = adenosine 5'-phosphosulfate + diphosphate. It functions in the pathway sulfur metabolism; hydrogen sulfide biosynthesis; sulfite from sulfate: step 1/3. Its activity is regulated as follows. Allosterically inhibited by 3'-phosphoadenosine 5'-phosphosulfate (PAPS). Functionally, catalyzes the first intracellular reaction of sulfate assimilation, forming adenosine-5'-phosphosulfate (APS) from inorganic sulfate and ATP. Plays an important role in sulfate activation as a component of the biosynthesis pathway of sulfur-containing amino acids. In Cryptococcus neoformans var. neoformans serotype D (strain B-3501A) (Filobasidiella neoformans), this protein is Sulfate adenylyltransferase.